We begin with the raw amino-acid sequence, 253 residues long: Small ribosomal subunit protein uS2 (253 aa).

Belongs to the universal ribosomal protein uS2 family.

The chain is Small ribosomal subunit protein uS2 from Parvibaculum lavamentivorans (strain DS-1 / DSM 13023 / NCIMB 13966).